The chain runs to 490 residues: Probable cytochrome P450 518B1 (490 aa).

The chain crosses the membrane as a helical span at residues 2–22 (LTNIIILIILYLFYDFCYKNF). Cys437 is a heme binding site.

This sequence belongs to the cytochrome P450 family. Requires heme as cofactor.

The protein localises to the membrane. The polypeptide is Probable cytochrome P450 518B1 (cyp518B1) (Dictyostelium discoideum (Social amoeba)).